The chain runs to 644 residues: Fidgetin-like protein 2 (644 aa).

Disordered regions lie at residues M1 to P36 and A285 to G323. Over residues P10–S27 the composition is skewed to polar residues. Positions A285–A294 are enriched in low complexity. ATP contacts are provided by residues A390 and G430–L435.

Belongs to the AAA ATPase family. Mg(2+) serves as cofactor.

It localises to the cytoplasm. The protein localises to the cell cortex. The enzyme catalyses ATP + H2O = ADP + phosphate + H(+). Microtubule-severing enzyme that negatively regulates cell migration and wound healing. In migrating cells, targets dynamic microtubules (MTs) at the leading edge and severs them, thereby suppressing motility. Microtubule severing releases ARHGEF2 which activates RHOA, which in turn regulates focal ahesion turnover via focal adhesion kinase, as opposed to F-actin polymerization, to suppress cell motility. Negative regulator of axon regeneration that suppresses axonal growth by selectively severing dynamic MTs in the distal axon shaft and growth cone. Contributes to proper cell branching during endothelial and neuronal development. The polypeptide is Fidgetin-like protein 2 (Fignl2) (Mus musculus (Mouse)).